The chain runs to 304 residues: Nucleotide-binding protein RHA1_ro07174 (304 aa).

24-31 (GLSGAGLQ) lines the ATP pocket. 75–78 (DVRS) provides a ligand contact to GTP.

Belongs to the RapZ-like family.

Its function is as follows. Displays ATPase and GTPase activities. This chain is Nucleotide-binding protein RHA1_ro07174, found in Rhodococcus jostii (strain RHA1).